Consider the following 506-residue polypeptide: Acrylate reductase flavoprotein subunit (506 aa).

Residues Met-1 to Ala-30 constitute a signal peptide (tat-type signal). FAD is bound by residues Ala-54, Glu-74, Asn-82, Gly-87, and Gly-88. Catalysis depends on Arg-333, which acts as the Proton donor. Residues Glu-473 and Ile-489 each contribute to the FAD site.

This sequence belongs to the FAD-dependent oxidoreductase 2 family. FRD/SDH subfamily. In terms of assembly, the ArdAB flavocytochrome c is composed of a FAD-containing subunit (ArdA) and a heme c-containing subunit (ArdB). FAD serves as cofactor. Predicted to be exported by the Tat system. The position of the signal peptide cleavage has not been experimentally proven.

Its subcellular location is the periplasm. Its activity is regulated as follows. Methacrylate acts as a competitive inhibitor of the acrylate reductase activity and suppresses the reductase activity in dose-dependent manner. Functionally, FAD-containing subunit of the ArdAB flavocytochrome c, which catalyzes the reduction of acrylate to propanoate and supports dimethylsulfoniopropionate-dependent anaerobic respiration. In vitro, can use the artificial electron donor methyl viologen. The natural electron donor is probably a low-potential cytochrome c. Also shows weak activity toward methacrylate in vitro (at a 22-fold lower rate) but cannot use other tested 2-enoates, including crotonic, fumaric, sorbic, urocanic, cinnamic, p-coumaric, caffeic or ferulic acids. The protein catalyzes a unidirectional reaction and cannot oxidize propanoate with phenazine metasulfate and dichlorophenolindophenol as electron acceptors. The polypeptide is Acrylate reductase flavoprotein subunit (Shewanella woodyi (strain ATCC 51908 / MS32)).